The primary structure comprises 350 residues: NADH-quinone oxidoreductase subunit H (350 aa).

A run of 8 helical transmembrane segments spans residues 5 to 25, 76 to 96, 118 to 138, 162 to 182, 190 to 210, 243 to 263, 284 to 304, and 319 to 339; these read FIIE…IMAM, FLFV…SAVI, IALL…MIGG, IAMG…SLKV, MNWN…CSFA, LFAE…LFFG, LLGI…YMWV, and LGWR…GAVI.

The protein belongs to the complex I subunit 1 family. NDH-1 is composed of 14 different subunits. Subunits NuoA, H, J, K, L, M, N constitute the membrane sector of the complex.

It is found in the cell inner membrane. The enzyme catalyses a quinone + NADH + 5 H(+)(in) = a quinol + NAD(+) + 4 H(+)(out). Functionally, NDH-1 shuttles electrons from NADH, via FMN and iron-sulfur (Fe-S) centers, to quinones in the respiratory chain. The immediate electron acceptor for the enzyme in this species is believed to be ubiquinone. Couples the redox reaction to proton translocation (for every two electrons transferred, four hydrogen ions are translocated across the cytoplasmic membrane), and thus conserves the redox energy in a proton gradient. This subunit may bind ubiquinone. The sequence is that of NADH-quinone oxidoreductase subunit H from Flavobacterium johnsoniae (strain ATCC 17061 / DSM 2064 / JCM 8514 / BCRC 14874 / CCUG 350202 / NBRC 14942 / NCIMB 11054 / UW101) (Cytophaga johnsonae).